The chain runs to 131 residues: Large ribosomal subunit protein bL12 (131 aa).

The protein belongs to the bacterial ribosomal protein bL12 family. In terms of assembly, homodimer. Part of the ribosomal stalk of the 50S ribosomal subunit. Forms a multimeric L10(L12)X complex, where L10 forms an elongated spine to which 2 to 4 L12 dimers bind in a sequential fashion. Binds GTP-bound translation factors.

In terms of biological role, forms part of the ribosomal stalk which helps the ribosome interact with GTP-bound translation factors. Is thus essential for accurate translation. This is Large ribosomal subunit protein bL12 from Tropheryma whipplei (strain Twist) (Whipple's bacillus).